The sequence spans 61 residues: Photosystem II reaction center X protein (61 aa).

Residues Ile-26–Phe-46 form a helical membrane-spanning segment.

Belongs to the PsbX family. Type 2 subfamily. As to quaternary structure, PSII consists of a core antenna complex that captures photons, and an electron transfer chain that converts photonic excitation into a charge separation. PSII forms dimeric complexes.

It is found in the cellular thylakoid membrane. Involved in the binding and/or turnover of quinones at the Q(B) site of Photosystem II. In Prochlorococcus marinus (strain AS9601), this protein is Photosystem II reaction center X protein.